The sequence spans 344 residues: L-rhamnose-proton symporter (344 aa).

Helical transmembrane passes span 4 to 24 (AITM…CFYA), 38 to 58 (WSVG…ALLL), 68 to 88 (FSLS…IGNI), 101 to 121 (MGIG…TPII), 137 to 157 (TLLG…AGQL), 175 to 195 (LVLA…MNAA), 214 to 234 (LPSY…FCFI), 259 to 279 (VLLS…YAWG), 290 to 310 (ISWM…GLVL), and 323 to 343 (VLSL…IGMA).

It belongs to the L-rhamnose transporter (TC 2.A.7.6) family.

The protein resides in the cell inner membrane. It catalyses the reaction L-rhamnopyranose(in) + H(+)(in) = L-rhamnopyranose(out) + H(+)(out). Functionally, uptake of L-rhamnose across the cytoplasmic membrane with the concomitant transport of protons into the cell (symport system). The protein is L-rhamnose-proton symporter of Shigella sonnei (strain Ss046).